The following is a 353-amino-acid chain: Alcohol dehydrogenase 1 (353 aa).

Cys-47, His-70, Cys-101, Cys-104, Cys-107, Cys-115, and Cys-157 together coordinate Zn(2+). NAD(+) contacts are provided by residues 181–187 (GAGGGLG), Asp-205, Lys-210, 274–276 (IGL), and Arg-346.

It belongs to the zinc-containing alcohol dehydrogenase family. As to quaternary structure, homotetramer. The cofactor is Zn(2+).

Its subcellular location is the cytoplasm. The enzyme catalyses a primary alcohol + NAD(+) = an aldehyde + NADH + H(+). The catalysed reaction is a secondary alcohol + NAD(+) = a ketone + NADH + H(+). The sequence is that of Alcohol dehydrogenase 1 (adh-1) from Neurospora crassa (strain ATCC 24698 / 74-OR23-1A / CBS 708.71 / DSM 1257 / FGSC 987).